The primary structure comprises 380 residues: NADPH quinone oxidoreductase (380 aa).

A mitochondrion-targeting transit peptide spans 1–17; the sequence is MSSFLSKRFISTTQRAM.

It belongs to the zinc-containing alcohol dehydrogenase family. Quinone oxidoreductase subfamily. Homodimer.

Its subcellular location is the mitochondrion. The catalysed reaction is a quinone + NADH + H(+) = a quinol + NAD(+). It carries out the reaction a quinone + NADPH + H(+) = a quinol + NADP(+). In terms of biological role, NADPH quinone oxidoreductase that efficiently reduces 1,4-benzoquinone, whereas no activities are found for menadiones and methoxyquinones. The sequence is that of NADPH quinone oxidoreductase from Kluyveromyces marxianus (Yeast).